The following is a 105-amino-acid chain: Small ribosomal subunit protein uS10 (105 aa).

It belongs to the universal ribosomal protein uS10 family. In terms of assembly, part of the 30S ribosomal subunit.

Functionally, involved in the binding of tRNA to the ribosomes. The polypeptide is Small ribosomal subunit protein uS10 (Chlamydia pneumoniae (Chlamydophila pneumoniae)).